A 186-amino-acid polypeptide reads, in one-letter code: ADP-ribosylation factor-like protein 8A (186 aa).

Positions 1 to 19 (MLALFNKLLDWFKALFWKE) form an intramembrane region, note=Mediates targeting to membranes. Residues 29-35 (QYSGKTT), 71-75 (DIGGQ), and 130-133 (NKRD) each bind GTP.

This sequence belongs to the small GTPase superfamily. Arf family.

The protein localises to the late endosome membrane. The protein resides in the lysosome membrane. Its function is as follows. May play a role in lysosomes motility. Alternatively, may play a role in chromosome segregation. This is ADP-ribosylation factor-like protein 8A (arl8a) from Xenopus tropicalis (Western clawed frog).